An 85-amino-acid chain; its full sequence is Large ribosomal subunit protein bL27 (85 aa).

The segment at 1 to 21 (MAHKKGVGSTRNGRDSESKRL) is disordered.

The protein belongs to the bacterial ribosomal protein bL27 family.

The chain is Large ribosomal subunit protein bL27 from Geobacter sulfurreducens (strain ATCC 51573 / DSM 12127 / PCA).